The primary structure comprises 205 residues: Holliday junction branch migration complex subunit RuvA (205 aa).

The interval 1 to 62 (MFEYVTGYVE…EDIMALYGFK (62 aa)) is domain I. Positions 63–141 (TREERLLFTK…DVVPDAFVDL (79 aa)) are domain II. Residues 142–152 (FSDTERFDEKK) form a flexible linker region. A domain III region spans residues 153–205 (GSSAELDEALEALRALGYAEREVSRVVPELLKESLTTDQYIKKALSLLLNGKR).

This sequence belongs to the RuvA family. Homotetramer. Forms an RuvA(8)-RuvB(12)-Holliday junction (HJ) complex. HJ DNA is sandwiched between 2 RuvA tetramers; dsDNA enters through RuvA and exits via RuvB. An RuvB hexamer assembles on each DNA strand where it exits the tetramer. Each RuvB hexamer is contacted by two RuvA subunits (via domain III) on 2 adjacent RuvB subunits; this complex drives branch migration. In the full resolvosome a probable DNA-RuvA(4)-RuvB(12)-RuvC(2) complex forms which resolves the HJ.

Its subcellular location is the cytoplasm. In terms of biological role, the RuvA-RuvB-RuvC complex processes Holliday junction (HJ) DNA during genetic recombination and DNA repair, while the RuvA-RuvB complex plays an important role in the rescue of blocked DNA replication forks via replication fork reversal (RFR). RuvA specifically binds to HJ cruciform DNA, conferring on it an open structure. The RuvB hexamer acts as an ATP-dependent pump, pulling dsDNA into and through the RuvAB complex. HJ branch migration allows RuvC to scan DNA until it finds its consensus sequence, where it cleaves and resolves the cruciform DNA. The chain is Holliday junction branch migration complex subunit RuvA from Bacillus cereus (strain ATCC 14579 / DSM 31 / CCUG 7414 / JCM 2152 / NBRC 15305 / NCIMB 9373 / NCTC 2599 / NRRL B-3711).